Consider the following 373-residue polypeptide: Probable leucine aminopeptidase 1 (373 aa).

Residues 1 to 18 (MKLLSVLALSATATSVLG) form the signal peptide. Residues histidine 176 and aspartate 195 each coordinate Zn(2+). Asparagine 196 carries N-linked (GlcNAc...) asparagine glycosylation. 2 residues coordinate Zn(2+): glutamate 234 and aspartate 261. An N-linked (GlcNAc...) asparagine glycan is attached at asparagine 288. A disulfide bridge connects residues cysteine 310 and cysteine 314. Residue histidine 343 participates in Zn(2+) binding.

The protein belongs to the peptidase M28 family. M28E subfamily. As to quaternary structure, monomer. Zn(2+) serves as cofactor.

It localises to the secreted. Its function is as follows. Extracellular aminopeptidase which contributes to pathogenicity. The chain is Probable leucine aminopeptidase 1 (LAP1) from Trichophyton verrucosum (strain HKI 0517).